We begin with the raw amino-acid sequence, 147 residues long: Hemoglobin subunit beta (147 aa).

Valine 2 is subject to N-acetylvaline. Residues 3–147 (HLSGDEKNAV…VANALAHRYH (145 aa)) form the Globin domain. Serine 45 is modified (phosphoserine). Lysine 60 is modified (N6-acetyllysine). Residue histidine 64 coordinates heme b. Residue lysine 83 is modified to N6-acetyllysine. Position 93 (histidine 93) interacts with heme b. Cysteine 94 carries the post-translational modification S-nitrosocysteine.

It belongs to the globin family. Heterotetramer of two alpha chains and two beta chains. In terms of tissue distribution, red blood cells.

Involved in oxygen transport from the lung to the various peripheral tissues. This chain is Hemoglobin subunit beta (HBB), found in Camelus dromedarius (Dromedary).